Reading from the N-terminus, the 201-residue chain is L(+)-tartrate dehydratase subunit beta (201 aa).

H37 is a catalytic residue.

Belongs to the class-I fumarase family. Heterotetramer of two alpha and two beta subunits.

It catalyses the reaction (2R,3R)-tartrate = oxaloacetate + H2O. This Shigella boydii serotype 4 (strain Sb227) protein is L(+)-tartrate dehydratase subunit beta (ttdB).